The chain runs to 432 residues: D-amino acid dehydrogenase (432 aa).

3 to 17 (VVILGSGVVGVASAW) is a binding site for FAD.

This sequence belongs to the DadA oxidoreductase family. The cofactor is FAD.

The catalysed reaction is a D-alpha-amino acid + A + H2O = a 2-oxocarboxylate + AH2 + NH4(+). Its pathway is amino-acid degradation; D-alanine degradation; NH(3) and pyruvate from D-alanine: step 1/1. Functionally, oxidative deamination of D-amino acids. In Shigella boydii serotype 18 (strain CDC 3083-94 / BS512), this protein is D-amino acid dehydrogenase.